The sequence spans 298 residues: ATP synthase gamma chain (298 aa).

Belongs to the ATPase gamma chain family. As to quaternary structure, F-type ATPases have 2 components, CF(1) - the catalytic core - and CF(0) - the membrane proton channel. CF(1) has five subunits: alpha(3), beta(3), gamma(1), delta(1), epsilon(1). CF(0) has three main subunits: a, b and c.

The protein resides in the cell membrane. Functionally, produces ATP from ADP in the presence of a proton gradient across the membrane. The gamma chain is believed to be important in regulating ATPase activity and the flow of protons through the CF(0) complex. In Parafrankia sp. (strain EAN1pec), this protein is ATP synthase gamma chain.